The following is a 204-amino-acid chain: uncharacterized protein (204 aa).

The N-terminal stretch at 1–17 (MKRLVTGLLALSLFLAA) is a signal peptide. A disordered region spans residues 17–100 (ACGQDSDQQK…NNNQANNNQK (84 aa)). Cys-18 carries the N-palmitoyl cysteine lipid modification. Cys-18 carries the S-diacylglycerol cysteine lipid modification. Basic and acidic residues predominate over residues 23-70 (DQQKDGNKEKDDKAKTEQQDKKTNDSSKDKKDNKDDSKDVNKDNKDNS). The segment covering 71–100 (ANDNQQQSNSNATNNDQNQTNNNQANNNQK) has biased composition (low complexity).

The protein localises to the cell membrane. This is an uncharacterized protein from Staphylococcus aureus (strain MSSA476).